The primary structure comprises 95 residues: Integration host factor subunit beta (95 aa).

The protein belongs to the bacterial histone-like protein family. As to quaternary structure, heterodimer of an alpha and a beta chain.

This protein is one of the two subunits of integration host factor, a specific DNA-binding protein that functions in genetic recombination as well as in transcriptional and translational control. The protein is Integration host factor subunit beta of Paracoccus denitrificans (strain Pd 1222).